The chain runs to 430 residues: Enolase (430 aa).

Gln165 contacts (2R)-2-phosphoglycerate. Glu207 (proton donor) is an active-site residue. Mg(2+)-binding residues include Asp244, Glu287, and Asp314. Residues Lys339, Arg368, Ser369, and Lys390 each contribute to the (2R)-2-phosphoglycerate site. Lys339 serves as the catalytic Proton acceptor.

The protein belongs to the enolase family. Component of the RNA degradosome, a multiprotein complex involved in RNA processing and mRNA degradation. Mg(2+) serves as cofactor.

Its subcellular location is the cytoplasm. The protein resides in the secreted. It is found in the cell surface. The catalysed reaction is (2R)-2-phosphoglycerate = phosphoenolpyruvate + H2O. Its pathway is carbohydrate degradation; glycolysis; pyruvate from D-glyceraldehyde 3-phosphate: step 4/5. In terms of biological role, catalyzes the reversible conversion of 2-phosphoglycerate (2-PG) into phosphoenolpyruvate (PEP). It is essential for the degradation of carbohydrates via glycolysis. This Xylella fastidiosa (strain M23) protein is Enolase.